Consider the following 355-residue polypeptide: Syntaxin-5 (355 aa).

Residues 1–333 are Cytoplasmic-facing; it reads MIPRKRYGSK…KYFQSVTSNR (333 aa). The segment covering 28–37 has biased composition (polar residues); sequence PATAGSSSSD. Positions 28–51 are disordered; sequence PATAGSSSSDIAPLPPPVTLVPPP. Residues 40–51 are compositionally biased toward pro residues; it reads PLPPPVTLVPPP. Residues 245-247 carry the IxM motif; signal for cargo packaging into COPII-coated vesicles motif; it reads IDM. The 63-residue stretch at 263–325 folds into the t-SNARE coiled-coil homology domain; sequence DSYIQSRADT…EAAHSEILKY (63 aa). The stretch at 287–318 forms a coiled coil; sequence FQQLAHMVKEQEETIQRIDENVLGAQLDVEAA. A helical; Anchor for type IV membrane protein membrane pass occupies residues 334–354; sequence WLMVKIFLILIVFFIIFVVFL. Position 355 (A355) is a topological domain, vesicular.

Belongs to the syntaxin family. As to quaternary structure, part of a ternary complex containing STX5A, NSFL1C and VCP. Identified in a unique SNARE complex composed of the Golgi SNAREs GOSR1, GOSR2, YKT6 and VTI1A. Component of a SNARE complex consisting of STX5, YKT6, GOSR1 and BET1L. Interacts with BET1L. Interacts with BET1. Interacts with COG4. Interacts with GM130/GOLGA2. Interacts (via IxM motif) with SEC24C and SEC24D; mediates STX5 packaging into COPII-coated vesicles. Interacts with VLDLR; this interaction mediates VLDLR translocation from the endoplasmic reticulum to the plasma membrane.

Its subcellular location is the endoplasmic reticulum-Golgi intermediate compartment membrane. It localises to the golgi apparatus membrane. In terms of biological role, mediates endoplasmic reticulum to Golgi transport. Together with p115/USO1 and GM130/GOLGA2, involved in vesicle tethering and fusion at the cis-Golgi membrane to maintain the stacked and inter-connected structure of the Golgi apparatus. Functionally, required for Golgi to endoplasmic reticulum retrogade transport, and for intra-Golgi transport. (Microbial infection) Required for the efficient production of infectious virion during human cytomegalovirus infection. Mechanistically, participates in the formation of the cytoplasmic viral assembly compartment where tegument acquisition and envelopment occur. The polypeptide is Syntaxin-5 (STX5) (Homo sapiens (Human)).